A 218-amino-acid chain; its full sequence is N-(5'-phosphoribosyl)anthranilate isomerase (218 aa).

This sequence belongs to the TrpF family.

It catalyses the reaction N-(5-phospho-beta-D-ribosyl)anthranilate = 1-(2-carboxyphenylamino)-1-deoxy-D-ribulose 5-phosphate. The protein operates within amino-acid biosynthesis; L-tryptophan biosynthesis; L-tryptophan from chorismate: step 3/5. The polypeptide is N-(5'-phosphoribosyl)anthranilate isomerase (Lachnoclostridium phytofermentans (strain ATCC 700394 / DSM 18823 / ISDg) (Clostridium phytofermentans)).